Reading from the N-terminus, the 187-residue chain is UPF0232 protein MUL_0004 (187 aa).

The segment covering 1–12 (MNGDGEQPGPGD) has biased composition (gly residues). Disordered regions lie at residues 1–77 (MNGD…QPLG) and 166–187 (ASPS…DTYG). The span at 14–30 (AARDELPSMDLVRRTLA) shows a compositional bias: basic and acidic residues. The segment covering 31 to 55 (EARAAARARGQDPGRGFAAGPAPRR) has biased composition (low complexity).

It belongs to the UPF0232 family.

The protein is UPF0232 protein MUL_0004 of Mycobacterium ulcerans (strain Agy99).